The following is a 229-amino-acid chain: Demethylmenaquinone methyltransferase (229 aa).

S-adenosyl-L-methionine is bound by residues Thr-57, Asp-77, and 101–102 (DV).

The protein belongs to the class I-like SAM-binding methyltransferase superfamily. MenG/UbiE family.

It catalyses the reaction a 2-demethylmenaquinol + S-adenosyl-L-methionine = a menaquinol + S-adenosyl-L-homocysteine + H(+). It functions in the pathway quinol/quinone metabolism; menaquinone biosynthesis; menaquinol from 1,4-dihydroxy-2-naphthoate: step 2/2. Its function is as follows. Methyltransferase required for the conversion of demethylmenaquinol (DMKH2) to menaquinol (MKH2). The protein is Demethylmenaquinone methyltransferase of Chlamydia muridarum (strain MoPn / Nigg).